We begin with the raw amino-acid sequence, 305 residues long: Protoheme IX farnesyltransferase (305 aa).

Helical transmembrane passes span leucine 29–alanine 49, leucine 55–isoleucine 75, alanine 101–asparagine 121, leucine 123–leucine 143, isoleucine 151–glycine 171, glycine 177–leucine 197, phenylalanine 219–glutamine 241, tryptophan 246–arginine 268, and isoleucine 283–leucine 303.

The protein belongs to the UbiA prenyltransferase family. Protoheme IX farnesyltransferase subfamily.

The protein resides in the cell inner membrane. The catalysed reaction is heme b + (2E,6E)-farnesyl diphosphate + H2O = Fe(II)-heme o + diphosphate. The protein operates within porphyrin-containing compound metabolism; heme O biosynthesis; heme O from protoheme: step 1/1. Functionally, converts heme B (protoheme IX) to heme O by substitution of the vinyl group on carbon 2 of heme B porphyrin ring with a hydroxyethyl farnesyl side group. This is Protoheme IX farnesyltransferase from Leptothrix cholodnii (strain ATCC 51168 / LMG 8142 / SP-6) (Leptothrix discophora (strain SP-6)).